Consider the following 589-residue polypeptide: Protein OS-9 homolog (589 aa).

A signal peptide spans 1–21 (MFSILNKLGIIWLALANISNC). 3 N-linked (GlcNAc...) asparagine glycosylation sites follow: N17, N61, and N90. The MRH domain occupies 130-288 (KDCVFAYGSN…VIGVPKLCSL (159 aa)). C132 and C148 are disulfide-bonded. Residues W143, Q155, D241, R247, E270, and Y276 each contribute to the a mannooligosaccharide derivative site. Disulfide bonds link C240–C274 and C255–C286. A glycan (N-linked (GlcNAc...) asparagine) is linked at N426. The segment at 497 to 520 (GKGSALDSTNNDKNNKATAENDKQ) is disordered. The segment covering 509 to 519 (KNNKATAENDK) has biased composition (basic and acidic residues). The Prevents secretion from ER motif lies at 586–589 (HDEL).

Belongs to the OS-9 family. In terms of assembly, interacts with missfolded ER lumenal proteins.

It is found in the endoplasmic reticulum membrane. Lectin involved in the quality control of the secretory pathway. As a member of the endoplasmic reticulum-associated degradation lumenal (ERAD-L) surveillance system, targets misfolded endoplasmic reticulum lumenal glycoproteins for degradation. The polypeptide is Protein OS-9 homolog (YOS9) (Debaryomyces hansenii (strain ATCC 36239 / CBS 767 / BCRC 21394 / JCM 1990 / NBRC 0083 / IGC 2968) (Yeast)).